The chain runs to 560 residues: MFS siderochrome iron transporter 1 (560 aa).

N29 is a glycosylation site (N-linked (GlcNAc...) asparagine). 11 helical membrane passes run 53–73 (LWLT…LVSV), 90–110 (LLAS…LTLA), 115–135 (VWGR…ALIM), 146–166 (VAAH…VDVM), 177–194 (MIMF…TFAG), 211–231 (FGAF…IMLF), 264–284 (VVGI…FSIV), 291–311 (WATG…AIFL), 331–351 (PTII…LLTI), 354–374 (AGYV…GIGL), and 379–399 (FKWA…LLIP). The N-linked (GlcNAc...) asparagine glycan is linked to N404. 3 helical membrane passes run 407–427 (IGAV…FSVC), 441–461 (VAVV…VGLA), and 522–542 (VIAG…WRNV).

The protein belongs to the major facilitator superfamily.

The protein resides in the membrane. Its function is as follows. Major facilitator transporter involved in siderophore transport. The chain is MFS siderochrome iron transporter 1 from Ajellomyces capsulatus (Darling's disease fungus).